The primary structure comprises 542 residues: Nibrin homolog (542 aa).

Positions 25 to 90 constitute an FHA domain; the sequence is YKVGRKGCDI…YGTFVKTDLG (66 aa). Residues 119–195 form the BRCT domain; it reads IYRLSLIPLV…KTIILTNWVM (77 aa). A disordered region spans residues 409–430; that stretch reads SRGHMDEKNSSDSVTIRRDRND. The segment at 465-500 is involved in MRE11-binding; the sequence is VDFKRFRKGNVTCGNSFSSLIPFAKDPYKEYDSWDV.

The protein belongs to the Nibrin family. In terms of assembly, component of the MRN complex composed of two heterodimers RAD50 and MRE11 associated with a single NBS1.

The protein resides in the nucleus. Its subcellular location is the chromosome. In terms of biological role, component of the MRN complex, which plays a central role in double-strand break (DSB) repair, DNA recombination, maintenance of telomere integrity and meiosis. The MRN complex is involved in the repair of DNA double-strand breaks (DSBs) via homologous recombination (HR), an error-free mechanism which primarily occurs during S and G2 phases. The complex (1) mediates the end resection of damaged DNA, which generates proper single-stranded DNA, a key initial steps in HR, and is (2) required for the recruitment of other repair factors and efficient activation of ATM and ATR upon DNA damage. The MRN complex possesses single-strand endonuclease activity and double-strand-specific 3'-5' exonuclease activity, which are provided by MRE11, to initiate end resection, which is required for single-strand invasion and recombination. Within the MRN complex, NBS1 acts as a protein-protein adapter, which specifically recognizes and binds phosphorylated proteins, promoting their recruitment to DNA damage sites. Recruits MRE11 and RAD50 components of the MRN complex to DSBs in response to DNA damage. This chain is Nibrin homolog, found in Arabidopsis thaliana (Mouse-ear cress).